We begin with the raw amino-acid sequence, 119 residues long: Large ribosomal subunit protein bL20 (119 aa).

It belongs to the bacterial ribosomal protein bL20 family.

Binds directly to 23S ribosomal RNA and is necessary for the in vitro assembly process of the 50S ribosomal subunit. It is not involved in the protein synthesizing functions of that subunit. The polypeptide is Large ribosomal subunit protein bL20 (Streptococcus pneumoniae serotype 2 (strain D39 / NCTC 7466)).